The primary structure comprises 1245 residues: ATP-dependent helicase/deoxyribonuclease subunit B (1245 aa).

The tract at residues W737 to E758 is disordered. Basic and acidic residues predominate over residues L748–E758.

The protein belongs to the helicase family. AddB/RexB type 2 subfamily. As to quaternary structure, heterodimer of AddA and RexB. The cofactor is Mg(2+).

The heterodimer acts as both an ATP-dependent DNA helicase and an ATP-dependent, dual-direction single-stranded exonuclease. Recognizes the chi site generating a DNA molecule suitable for the initiation of homologous recombination. This subunit has 5' -&gt; 3' nuclease activity but not helicase activity. This is ATP-dependent helicase/deoxyribonuclease subunit B from Limosilactobacillus fermentum (strain NBRC 3956 / LMG 18251) (Lactobacillus fermentum).